We begin with the raw amino-acid sequence, 337 residues long: MTEIRNNWTKEEISAIYNSPILDLMYRGATVHREFHDPQEVQVCTLLSIKTGGCPEDCSYCPQAARYHTDVKVEKLMDVKDVLNSALEAKESGSTRFCMGAAWREVRDNKDFDKVIDMVKGVSTMGMEVCCTLGMLTPEQADKLKDAGLYAYNHNLDTSAEHYDKVITTRTYDDRLETLDNVRNAKISVCSGGIIGMGESHGDRVGMLHTLANMVEHPESVPVNALVPVEGTPLEDQPRVSVWEMVRMIATARIIMPKAMVRLSAGRVRMNTEEQALCFLAGANSIFAGDKLLTTPNPEVNADKEMFQVLNLKPRQSFKNGDAPKIKFEQIPSALVK.

A Radical SAM core domain is found at Gln-39–Arg-267. Residues Cys-54, Cys-58, and Cys-61 each coordinate [4Fe-4S] cluster. The [2Fe-2S] cluster site is built by Cys-98, Cys-130, Cys-190, and Arg-262.

Belongs to the radical SAM superfamily. Biotin synthase family. Homodimer. Requires [4Fe-4S] cluster as cofactor. [2Fe-2S] cluster is required as a cofactor.

It carries out the reaction (4R,5S)-dethiobiotin + (sulfur carrier)-SH + 2 reduced [2Fe-2S]-[ferredoxin] + 2 S-adenosyl-L-methionine = (sulfur carrier)-H + biotin + 2 5'-deoxyadenosine + 2 L-methionine + 2 oxidized [2Fe-2S]-[ferredoxin]. It functions in the pathway cofactor biosynthesis; biotin biosynthesis; biotin from 7,8-diaminononanoate: step 2/2. Functionally, catalyzes the conversion of dethiobiotin (DTB) to biotin by the insertion of a sulfur atom into dethiobiotin via a radical-based mechanism. The sequence is that of Biotin synthase from Cytophaga hutchinsonii (strain ATCC 33406 / DSM 1761 / CIP 103989 / NBRC 15051 / NCIMB 9469 / D465).